A 234-amino-acid polypeptide reads, in one-letter code: Large ribosomal subunit protein uL1 (234 aa).

It belongs to the universal ribosomal protein uL1 family. In terms of assembly, part of the 50S ribosomal subunit.

Functionally, binds directly to 23S rRNA. The L1 stalk is quite mobile in the ribosome, and is involved in E site tRNA release. Its function is as follows. Protein L1 is also a translational repressor protein, it controls the translation of the L11 operon by binding to its mRNA. In Psychromonas ingrahamii (strain DSM 17664 / CCUG 51855 / 37), this protein is Large ribosomal subunit protein uL1.